The following is a 178-amino-acid chain: Large ribosomal subunit protein uL5 (178 aa).

Belongs to the universal ribosomal protein uL5 family. As to quaternary structure, part of the 50S ribosomal subunit; contacts the 5S rRNA and probably tRNA. Forms a bridge to the 30S subunit in the 70S ribosome.

This is one of the proteins that bind and probably mediate the attachment of the 5S RNA into the large ribosomal subunit, where it forms part of the central protuberance. In the 70S ribosome it contacts protein S13 of the 30S subunit (bridge B1b), connecting the 2 subunits; this bridge is implicated in subunit movement. May contact the P site tRNA; the 5S rRNA and some of its associated proteins might help stabilize positioning of ribosome-bound tRNAs. This Archaeoglobus fulgidus (strain ATCC 49558 / DSM 4304 / JCM 9628 / NBRC 100126 / VC-16) protein is Large ribosomal subunit protein uL5.